The chain runs to 231 residues: Ribonuclease 3 (231 aa).

One can recognise an RNase III domain in the interval 12 to 139 (LKAFLQKNNI…LIAAIYLDQG (128 aa)). A Mg(2+)-binding site is contributed by E52. D56 is a catalytic residue. 2 residues coordinate Mg(2+): D125 and E128. Residue E128 is part of the active site. A DRBM domain is found at 165 to 231 (DPKSELQEYF…AANALSKLKT (67 aa)).

This sequence belongs to the ribonuclease III family. Homodimer. The cofactor is Mg(2+).

Its subcellular location is the cytoplasm. The enzyme catalyses Endonucleolytic cleavage to 5'-phosphomonoester.. Digests double-stranded RNA. Involved in the processing of primary rRNA transcript to yield the immediate precursors to the large and small rRNAs (23S and 16S). Processes some mRNAs, and tRNAs when they are encoded in the rRNA operon. Processes pre-crRNA and tracrRNA of type II CRISPR loci if present in the organism. This chain is Ribonuclease 3, found in Mycoplasmopsis synoviae (strain 53) (Mycoplasma synoviae).